We begin with the raw amino-acid sequence, 125 residues long: Ribonuclease P protein component (125 aa).

Belongs to the RnpA family. Consists of a catalytic RNA component (M1 or rnpB) and a protein subunit.

It catalyses the reaction Endonucleolytic cleavage of RNA, removing 5'-extranucleotides from tRNA precursor.. In terms of biological role, RNaseP catalyzes the removal of the 5'-leader sequence from pre-tRNA to produce the mature 5'-terminus. It can also cleave other RNA substrates such as 4.5S RNA. The protein component plays an auxiliary but essential role in vivo by binding to the 5'-leader sequence and broadening the substrate specificity of the ribozyme. The sequence is that of Ribonuclease P protein component from Idiomarina loihiensis (strain ATCC BAA-735 / DSM 15497 / L2-TR).